The chain runs to 159 residues: Small heat shock protein hspM (159 aa).

The 159-residue stretch at methionine 1–asparagine 159 folds into the sHSP domain. Residues methionine 35 to asparagine 101 are disordered. Low complexity-rich tracts occupy residues asparagine 36–asparagine 46 and serine 61–asparagine 95.

The protein belongs to the small heat shock protein (HSP20) family.

This is Small heat shock protein hspM (hspM) from Dictyostelium discoideum (Social amoeba).